The primary structure comprises 313 residues: Syndecan-1 (313 aa).

Residues 1–22 (MRRAALWLWLCALALRLQPALP) form the signal peptide. Over 23–257 (QIVTANVPPE…GLLDRKEVLG (235 aa)) the chain is Extracellular. 2 disordered regions span residues 27 to 58 (ANVP…MTLS) and 95 to 186 (AGEK…VEDG). Positions 32–42 (EDQDGSGDDSD) are enriched in acidic residues. S37 is a glycosylation site (O-linked (Xyl...) (chondroitin sulfate) serine). N43 carries N-linked (GlcNAc...) asparagine glycosylation. S45 and S47 each carry an O-linked (Xyl...) (heparan sulfate) serine glycan. The segment covering 97–129 (EKPEEGEPVAHVEAEPDFTARDKEKEATTRPRE) has biased composition (basic and acidic residues). Low complexity predominate over residues 135-154 (VTQQASTAARATTAQASVTS). O-linked (Xyl...) (chondroitin sulfate) serine glycosylation is found at S209 and S219. The helical transmembrane segment at 258–278 (GVIAGGLVGLIFAVCLVAFML) threads the bilayer. Over 279-313 (YRMKKKDEGSYSLEEPKQANGGAYQKPTKQEEFYA) the chain is Cytoplasmic. The span at 286-295 (EGSYSLEEPK) shows a compositional bias: basic and acidic residues. Positions 286 to 313 (EGSYSLEEPKQANGGAYQKPTKQEEFYA) are disordered. S288 is subject to Phosphoserine.

The protein belongs to the syndecan proteoglycan family. As to quaternary structure, interacts with CDCP1. Interacts (via C-terminus) with TIAM1 (via PDZ domain). Interacts with MDK. Post-translationally, shedding is enhanced by a number of factors such as heparanase, thrombin or EGF. Also by stress and wound healing. PMA-mediated shedding is inhibited by TIMP3.

The protein localises to the membrane. It is found in the secreted. Its subcellular location is the extracellular exosome. Functionally, cell surface proteoglycan that contains both heparan sulfate and chondroitin sulfate and that links the cytoskeleton to the interstitial matrix. Regulates exosome biogenesis in concert with SDCBP and PDCD6IP. Able to induce its own expression in dental mesenchymal cells and also in the neighboring dental epithelial cells via an MSX1-mediated pathway. This Rattus norvegicus (Rat) protein is Syndecan-1.